Reading from the N-terminus, the 278-residue chain is Transmembrane protein 45B (278 aa).

Helical transmembrane passes span 7–27, 49–69, 95–115, 117–137, 149–169, 183–203, and 215–235; these read HALPGSFFLIVGLWWSVKYPL, IIEGAVKTLFAIIGILAEQFV, YLFFGVSGLMDMITYLYFHIV, LGLDRVVLAMAVFIEGFLFYF, IHSLLLFGLFGAAVSISLEVI, LLILQGTWFWQIGFVLFPPFG, and IMFITMCFCWHYLVALCIVAI. A phosphoserine mark is found at Ser-273 and Ser-275.

This sequence belongs to the TMEM45 family.

It is found in the endosome membrane. The protein localises to the lysosome membrane. Its subcellular location is the golgi apparatus. The protein resides in the trans-Golgi network membrane. Plays a role in innate immunity. This chain is Transmembrane protein 45B (Tmem45b), found in Mus musculus (Mouse).